The chain runs to 209 residues: Uracil phosphoribosyltransferase (209 aa).

5-phospho-alpha-D-ribose 1-diphosphate is bound by residues Arg-79, Arg-104, and 131-139 (DPMLATGGS). Residues Ile-194 and 199-201 (GDA) each bind uracil. Asp-200 lines the 5-phospho-alpha-D-ribose 1-diphosphate pocket.

This sequence belongs to the UPRTase family. Mg(2+) serves as cofactor.

The catalysed reaction is UMP + diphosphate = 5-phospho-alpha-D-ribose 1-diphosphate + uracil. Its pathway is pyrimidine metabolism; UMP biosynthesis via salvage pathway; UMP from uracil: step 1/1. Allosterically activated by GTP. Its function is as follows. Catalyzes the conversion of uracil and 5-phospho-alpha-D-ribose 1-diphosphate (PRPP) to UMP and diphosphate. This Listeria innocua serovar 6a (strain ATCC BAA-680 / CLIP 11262) protein is Uracil phosphoribosyltransferase.